The sequence spans 272 residues: Phosphate import ATP-binding protein PstB (272 aa).

Residues 26 to 267 (LDIKNLDLYY…PSEKQTEDYI (242 aa)) enclose the ABC transporter domain. ATP is bound at residue 58–65 (GPSGCGKS).

It belongs to the ABC transporter superfamily. Phosphate importer (TC 3.A.1.7) family. The complex is composed of two ATP-binding proteins (PstB), two transmembrane proteins (PstC and PstA) and a solute-binding protein (PstS).

The protein resides in the cell inner membrane. It catalyses the reaction phosphate(out) + ATP + H2O = ADP + 2 phosphate(in) + H(+). Part of the ABC transporter complex PstSACB involved in phosphate import. Responsible for energy coupling to the transport system. The chain is Phosphate import ATP-binding protein PstB from Idiomarina loihiensis (strain ATCC BAA-735 / DSM 15497 / L2-TR).